Here is a 417-residue protein sequence, read N- to C-terminus: Serine hydroxymethyltransferase 1 (417 aa).

(6S)-5,6,7,8-tetrahydrofolate contacts are provided by residues Leu-121 and 125–127 (GHL). At Lys-229 the chain carries N6-(pyridoxal phosphate)lysine. A (6S)-5,6,7,8-tetrahydrofolate-binding site is contributed by 354 to 356 (SPF).

Belongs to the SHMT family. As to quaternary structure, homodimer. The cofactor is pyridoxal 5'-phosphate.

It localises to the cytoplasm. The enzyme catalyses (6R)-5,10-methylene-5,6,7,8-tetrahydrofolate + glycine + H2O = (6S)-5,6,7,8-tetrahydrofolate + L-serine. It participates in one-carbon metabolism; tetrahydrofolate interconversion. It functions in the pathway amino-acid biosynthesis; glycine biosynthesis; glycine from L-serine: step 1/1. In terms of biological role, catalyzes the reversible interconversion of serine and glycine with tetrahydrofolate (THF) serving as the one-carbon carrier. This reaction serves as the major source of one-carbon groups required for the biosynthesis of purines, thymidylate, methionine, and other important biomolecules. Also exhibits THF-independent aldolase activity toward beta-hydroxyamino acids, producing glycine and aldehydes, via a retro-aldol mechanism. This is Serine hydroxymethyltransferase 1 from Pseudomonas syringae pv. syringae (strain B728a).